The following is a 476-amino-acid chain: Transposase for transposon Tn5 (476 aa).

The interaction with DNA stretch occupies residues 1–70 (MITSALHRAA…YRFIRNPNVS (70 aa)). 2 residues coordinate Mg(2+): Asp-97 and Asp-188. 2 interaction with DNA regions span residues 237–255 (YQIS…KRKN) and 319–348 (YTHR…EPDN). Glu-326 provides a ligand contact to Mg(2+). Residues 369–476 (SFTLPQALRA…KDLMAQGIKI (108 aa)) are important for dimerization.

It belongs to the transposase 11 family. In terms of assembly, monomer. Homodimer of tnp (isoform 1), and heterodimer of tnp (isoform 1) and inh (isoform 2). Mg(2+) is required as a cofactor.

Functionally, mediates transposition of transposon Tn5 by a 'cut and paste' mechanism. First, the monomeric transposase binds the 19 bp inverted DNA repeats flanking the transposon. Then, dimerization of the DNA-bound transposase creates a synaptic DNA complex. After nicking of the first DNA strand, excision of the transposon proceeds through a series of intermediates. The transposase then mediates the insertion of the transposon at a new site by strand transfer. The activity of the wild-type transposase is very low, and is further inhibited by dimerization with the transposase inhibitor (inh). This chain is Transposase for transposon Tn5 (tnpA), found in Escherichia coli.